The following is a 479-amino-acid chain: POU domain, class 2, transcription factor 2 (479 aa).

Disordered stretches follow at residues 1 to 86, 166 to 200, 275 to 298, 357 to 393, and 409 to 479; these read MVHS…AQPH, TQAV…PSDL, SSLP…GRRR, PCSA…SQAS, and TLHP…PYQP. Positions 12-37 are enriched in basic and acidic residues; sequence RMSKPLEAEKQGLDSPSEHTDTERNG. Residues 38–60 show a composition bias toward polar residues; that stretch reads PDTNHQNPQNKTSPFSVSPTGPS. A compositionally biased stretch (pro residues) spans 76–85; that stretch reads APLPPQPAQP. Residues 195 to 269 form the POU-specific domain; it reads EEPSDLEELE…LLEKWLNDAE (75 aa). Residues 275–288 show a composition bias toward low complexity; the sequence is SSLPSPNQLSSPSL. The homeobox DNA-binding region spans 297–356; sequence RRKKRTSIETNVRFALEKSFLANQKPTSEEILLIAEQLHMEKEVIRVWFCNRRQKEKRIN. The interval 389–410 is leucine-zipper; sequence LSQASSSLSTTVTTLSSAVGTL. Gly residues predominate over residues 416 to 425; it reads AGGGGGGGGA.

Belongs to the POU transcription factor family. Class-2 subfamily. As to quaternary structure, interacts with NR3C1, AR and PGR. Interacts with POU2AF1; the interaction increases POU2F2 transactivation activity. In terms of tissue distribution, isoform 3 is B-cell specific. Isoform 5 is expressed in B-cells and the immunoglobulin-expressing T-cell line MOLT-4, but not in the T-cell line BW5147.

The protein localises to the cytoplasm. The protein resides in the nucleus. Transactivation activity is enhanced by transcriptional coactivator POU2AF1. In terms of biological role, transcription factor that specifically binds to the octamer motif (5'-ATTTGCAT-3'). Regulates IL6 expression in B cells with POU2AF1. Regulates transcription in a number of tissues in addition to activating immunoglobulin gene expression. Modulates transcription transactivation by NR3C1, AR and PGR. Functionally, activates the U2 small nuclear RNA (snRNA) promoter. This chain is POU domain, class 2, transcription factor 2, found in Homo sapiens (Human).